We begin with the raw amino-acid sequence, 2388 residues long: MASGPRNDDIAIVGLACRFPGGASNETKLWDLLSNRESAFTEVPPERFNVDAYHHPSPNKLNTLNSRGAHFMHEDVSAFDAPFFGITAQEANAMDPAARMLLELTFEALESAGQKLEDVAGSDTSCYVGCFTRDYHEMLYRDIESAPMYTGTGTGFSLFSNRISWFYDFRGPSMTLDTACSSSLVGLHLACRGLQAGESKMAVVCGANVILSPDIALTLSNLHMLSMDGLSRSFAEGTTGYGRGEGIASLILKRVEDALRDGDPIRAVIRGSGVNQDGHTKGITVPSSEAQADLIQTVYSSAGLDPSETGYFEAHGTGTAVGDPLELGAIAKSISKSRKVENKLVVGSIKSNIGHLEGAAGLAGVIKSVLMVEKNAILPNIHFEKPNRRIPFEQWKIKIPTELMPWPASGVRRASVNSFGYGGTNAHVILDDAESYLQKRLSNGHSEENGMELLKETRIFLLSARDEASLERLKQVYSDYIADVAGRRSPDNLFDESAYLDGLAYTLGCRRSVFPCRSFITASTLSELQESLSVQRLISTKAATSSRLGFVFTGQGAQWARMGLVLMDYPVFAQSIQEADRYLSEELRSSWSVLEELGKDAEHSQIGLAEFSQPLCTILQVALVDLLTSWQILPATVVGHSSGEIAAAYSFGAITKQDAWKISYWRGQLCAQLPLKRPELRGAMMAVGLGREEALSYIEKTGNGQAVIACVNSPSSVTLSGDETAINDIESALQAQNIFARKLNVQNAYHSHHMQPLADEYLAALEGLSTLSQEKAGTVKMASSVTGALINHTDLGPSYWVQNLVSPVLFSNAVEALLKQSTKGRRQARANEPAFDYLVEIGPHAALKGPLRQILQAHEASQIPYSSVLMRGEDGPVAALSAAGDLVCRGIQVDIKAVNRFQGRAIPLTNLPTYPWNHSLKYWADSRVSRARQHRKYGRHDLLGAPTQDSDELEPRWRHFLRVSDNPWIQDHIVHSSILYPGSGILAMPLHALQTLADSHRDVESIGLRDVSIVKAIVVPDDQFGLEVFLRMRRQRPRNGTWNGWWEFSVCSNQENDHVEEHGFGLGKIHYRPEKDTSVKTATNHVNDEFEREFDEVQATSTASISPVDFYAVAKSVGLTYGPSFQGLTEINAGNAKCSWKIQVPDTQKIMPAGVESPHIVHPTTLDIVFHSLFAAIGDGHLDMQHAAVPIGLKSMKISVDLPTGGNTFLKGISKVSRDAGRDIVADIRVAAESSNTPSIIVEGLRCRELPNGNSQSGPSETIKAPIGHVVQKIDVDLIEPIQLAQHIQKRFLERKEDGTLASEDLGEAIITIVDLVAHKNPRSSLLQVGGVTPELTQRILSNLEADNVSAKRFKNIKVVDANQELISQLETQYATPAGTVQFEKVTLDEAQSLAELKESSIDLAIVNIEELHSDKVSEYLANVLRSLKPGGKVLKIDSAGRNGAIGASDTLSFDTLCAGPEHVLSFATKGTAEKANTENFRTVILLPRCPSENVKKVASALEQVITVKGAIDTVIWSAEMPSLENSSTVISLLEFDDAFVADLSEEDFSSLKTLALGVKRILWVAHGTDPQMQTAAGWLRSLSNENMGIDYCYLLLESATDQEALDVAKLIERVSSTEEMEREYTERDDGLCCSRWAAKTELSALVGADSDQSKDATMRLGEARHGLTLTGKRGKLPSDARFTSVDVLDQNLTENEVMIDVRSVLLSTNDVQGTGQTGWREAAGVVVATGTAGSFEVGTAVSFVYDGPISTKAKINSKYCSTLSGTPEFQDALLQSVTYPTVYHGLCTLGQLRCDKTIFVQGGSSILGQAAISLARRLGATVFASVRDEEQNSILQRLGVPSDKILNDNVCERSSIIKRVNEGRGFDVIFNATGDEETIAELWQCIARGGKFINADANKKDTPATFNLSAKPFTMGASFEIIDMNEYLTNDFSTYQSIRDESESFRTRCSAVGLQIPVFTAGNIHEALDSVHVPTGLGKAVLLFSPDSKIPVSPDVKNQLRLRPDATYVLAGGLGGLGRSLAKLMVGSGARHLAFLSRSGPGSAAAQSISEEFSPLGVTVNFYGCDVADSESVSHTFGNIAKNQALPPIRGIIQSAAVLRDSIFENMSHTQWTEAVRPKVQGSWNLHQASLSGPCAKEGLDFFVMLASISGFVGNRGQANYAGGNSFQDALAKYRKSLGLAATSVDLGLMQDIGLIAERGGQSNLSDDTVVPLTAKDFELIFKLAMNSEGHDVPAQIVTGLPTGGILQKQGIETLPFYYRDPRFSAMQFMDLDETLTSAGGSAGNESVSMEEQLASAKSREQANGIVLEALRAQVAKALRCPAEDIDTARPLHYYGMDSLMAVDMRGWVQGKLKAEISLFDVMSGSSISALAEKISKASKLIKAELE.

In terms of domain architecture, Ketosynthase family 3 (KS3) spans 7-432 (NDDIAIVGLA…GTNAHVILDD (426 aa)). Active-site for beta-ketoacyl synthase activity residues include Cys-180, His-315, and His-355. Residues 549–875 (GFVFTGQGAQ…SSVLMRGEDG (327 aa)) are malonyl-CoA:ACP transacylase (MAT) domain. Ser-641 functions as the For malonyltransferase activity in the catalytic mechanism. The N-terminal hotdog fold stretch occupies residues 940–1074 (HDLLGAPTQD…GLGKIHYRPE (135 aa)). In terms of domain architecture, PKS/mFAS DH spans 940–1256 (HDLLGAPTQD…CRELPNGNSQ (317 aa)). A dehydratase (DH) domain region spans residues 941–1251 (DLLGAPTQDS…VEGLRCRELP (311 aa)). The Proton acceptor; for dehydratase activity role is filled by His-972. A C-terminal hotdog fold region spans residues 1102–1256 (TASISPVDFY…CRELPNGNSQ (155 aa)). Catalysis depends on Asp-1167, which acts as the Proton donor; for dehydratase activity. Positions 1676 to 1983 (KLPSDARFTS…VPTGLGKAVL (308 aa)) are enoyl reductase (ER) domain. The segment at 2007–2191 (ATYVLAGGLG…AATSVDLGLM (185 aa)) is ketoreductase (KR) domain. One can recognise a Carrier domain in the interval 2303–2380 (QANGIVLEAL…ALAEKISKAS (78 aa)). Ser-2340 carries the post-translational modification O-(pantetheine 4'-phosphoryl)serine.

Pantetheine 4'-phosphate is required as a cofactor.

In terms of biological role, highly reducing polyketide synthase; part of a gene cluster that mediates the biosynthesis of a yet unidentified natural product. The protein is Highly reducing polyketide synthase Preu1 of Preussia isomera (Coprophilous fungus).